Consider the following 299-residue polypeptide: Probable lipid kinase YegS (299 aa).

Positions 2 to 133 constitute a DAGKc domain; the sequence is ANFPASLLIL…IDMARVNDKT (132 aa). ATP is bound by residues T40, 66–72, and T95; that span reads GDGTINE. Mg(2+) contacts are provided by L215, D218, and L220. The Proton acceptor role is filled by E271.

It belongs to the diacylglycerol/lipid kinase family. YegS lipid kinase subfamily. Requires Mg(2+) as cofactor. The cofactor is Ca(2+).

It is found in the cytoplasm. Functionally, probably phosphorylates lipids; the in vivo substrate is unknown. The polypeptide is Probable lipid kinase YegS (Salmonella heidelberg (strain SL476)).